Reading from the N-terminus, the 117-residue chain is Venom nerve growth factor (117 aa).

Disulfide bonds link C12/C77, C55/C105, and C65/C107. An N-linked (GlcNAc...) asparagine glycan is attached at N21.

The protein belongs to the NGF-beta family. Homodimer; non-covalently linked. As to expression, expressed by the venom gland.

The protein localises to the secreted. Functionally, nerve growth factor is important for the development and maintenance of the sympathetic and sensory nervous systems. It stimulates division and differentiation of sympathetic and embryonic sensory neurons as well as basal forebrain cholinergic neurons in the brain. Its relevance in the snake venom is not clear. However, it has been shown to inhibit metalloproteinase-dependent proteolysis of platelet glycoprotein Ib alpha, suggesting a metalloproteinase inhibition to prevent metalloprotease autodigestion and/or protection against prey proteases. Binds a lipid between the two protein chains in the homodimer. The lipid-bound form promotes histamine relase from mouse mast cells, contrary to the lipid-free form. This chain is Venom nerve growth factor, found in Daboia russelii (Russel's viper).